The chain runs to 273 residues: HMP-PP phosphatase (273 aa).

The Nucleophile role is filled by Asp-8. 3 residues coordinate Mg(2+): Asp-8, Asp-10, and Asp-212.

This sequence belongs to the HAD-like hydrolase superfamily. Cof family. Requires Mg(2+) as cofactor.

It carries out the reaction 4-amino-2-methyl-5-(diphosphooxymethyl)pyrimidine + H2O = 4-amino-2-methyl-5-(phosphooxymethyl)pyrimidine + phosphate + H(+). Its function is as follows. Catalyzes the hydrolysis of 4-amino-2-methyl-5-hydroxymethylpyrimidine pyrophosphate (HMP-PP) to 4-amino-2-methyl-5-hydroxymethylpyrimidine phosphate (HMP-P). The sequence is that of HMP-PP phosphatase from Yersinia pestis bv. Antiqua (strain Antiqua).